A 248-amino-acid polypeptide reads, in one-letter code: 1,2-phenylacetyl-CoA epoxidase, subunit C (248 aa).

Substrate is bound by residues 76-79 (QFSN) and 177-179 (IAL).

Forms a stable heterotetramer (dimer of heterodimers) with PaaA and a stable heterodimer with PaaB.

Its pathway is aromatic compound metabolism; phenylacetate degradation. Component of 1,2-phenylacetyl-CoA epoxidase multicomponent enzyme system which catalyzes the reduction of phenylacetyl-CoA (PA-CoA) to form 1,2-epoxyphenylacetyl-CoA. The subunit C may be essential for structural integrity of the alpha subunit. This Escherichia coli (strain K12) protein is 1,2-phenylacetyl-CoA epoxidase, subunit C (paaC).